A 91-amino-acid chain; its full sequence is MVKLRLKRCGRKKRAVYRIVAIDVRSRREGRDLRKVGLYDPINNKTHLNVPAILYFIERGAQPTRTVNDLLKKAGVLKDTGIPVVGTLVSK.

It belongs to the bacterial ribosomal protein bS16 family.

The protein resides in the plastid. Its subcellular location is the chloroplast. This chain is Small ribosomal subunit protein bS16c, found in Pelargonium hortorum (Common geranium).